Here is a 186-residue protein sequence, read N- to C-terminus: Ribosome-recycling factor (186 aa).

It belongs to the RRF family.

The protein resides in the cytoplasm. Its function is as follows. Responsible for the release of ribosomes from messenger RNA at the termination of protein biosynthesis. May increase the efficiency of translation by recycling ribosomes from one round of translation to another. The sequence is that of Ribosome-recycling factor from Janthinobacterium sp. (strain Marseille) (Minibacterium massiliensis).